The following is a 3032-amino-acid chain: Biorientation of chromosomes in cell division protein 1-like 1 (3032 aa).

Pro residues predominate over residues 1–31 (MATNPQPQPPPPAPPPPPPQPQPPPPPPGPG). Disordered regions lie at residues 1–48 (MATN…GAGD), 164–195 (EEAA…SANV), 214–397 (NAAR…LDSD), and 409–465 (VHTS…RGVR). Residues 32 to 46 (AGPGASGPGSAGAGA) are compositionally biased toward gly residues. Residues 234–243 (KLSSQPSTDV) show a composition bias toward polar residues. The segment covering 244 to 261 (STDKERGSEDATEREKAT) has biased composition (basic and acidic residues). At Ser264 the chain carries Phosphoserine. The span at 310–391 (TDPKIKSMDK…RAAEGTKEDC (82 aa)) shows a compositional bias: basic and acidic residues. Positions 416-441 (SFEEDTEEEVVVSESMEEGEITSEDE) are enriched in acidic residues. Lys471 bears the N6-acetyllysine mark. Ser480 and Ser482 each carry phosphoserine. Disordered stretches follow at residues 480-1153 (SDSD…HKAT), 1165-1296 (MVDS…HNSN), 1309-1366 (GGRA…LSED), 1424-1491 (AAGE…SGRR), 1675-1701 (GSLS…TEGT), 1740-1858 (AKPQ…GHAS), and 1934-1978 (ALAG…ISTG). Composition is skewed to basic and acidic residues over residues 488–503 (VEQR…EERL) and 510–525 (REKL…EKTK). The residue at position 534 (Lys534) is an N6-acetyllysine. 2 stretches are compositionally biased toward basic and acidic residues: residues 547–568 (LEPK…EKKV) and 578–653 (SRNV…EYKR). Ser632 and Ser656 each carry phosphoserine. Position 657 is a phosphothreonine (Thr657). Basic and acidic residues-rich tracts occupy residues 668–736 (TDTR…DKPS), 743–768 (GDSV…ESVR), and 799–846 (RDGK…KLQK). Residues 848-859 (ALSSKQHSVTSQ) are compositionally biased toward polar residues. 4 stretches are compositionally biased toward basic and acidic residues: residues 860–872 (KRSE…KCET), 934–960 (KPDK…RTSE), 978–1015 (AQKD…DGHR), and 1022–1069 (SNKD…ENRR). The residue at position 1071 (Ser1071) is a Phosphoserine. Residues 1086–1096 (MSGTTSSSSLQ) are compositionally biased toward polar residues. Position 1138 is a phosphoserine (Ser1138). A compositionally biased stretch (low complexity) spans 1272–1286 (STDSDLLSSSGSVTV). Over residues 1312–1329 (ASTSLANHSDVPNQYSTV) the composition is skewed to polar residues. A phosphoserine mark is found at Ser1315 and Ser1364. 2 stretches are compositionally biased toward basic and acidic residues: residues 1428-1470 (HVVD…RRDS) and 1479-1491 (GKME…SGRR). Phosphoserine is present on residues Ser1676 and Ser1685. The span at 1958–1970 (HHSDSQLTRKETV) shows a compositional bias: basic and acidic residues. Ser1989, Ser2001, Ser2092, and Ser2166 each carry phosphoserine. The segment at 2082–2101 (PMPSAVSGENSQLTASRSEE) is disordered. Polar residues predominate over residues 2088-2097 (SGENSQLTAS). Disordered regions lie at residues 2303 to 2322 (EENQ…LATK), 2370 to 2469 (EPSV…HCLT), 2536 to 2559 (EGGL…EKMG), and 2575 to 2596 (DVTL…PPKG). Residues Ser2417 and Ser2443 each carry the phosphoserine modification. A compositionally biased stretch (basic and acidic residues) spans 2449-2459 (CLREPEQKPAE). At Ser2554 the chain carries Phosphoserine. Position 2681 is a phosphoserine (Ser2681). The tract at residues 2682-3032 (TEALSGCSVE…DENPLKKAKR (351 aa)) is disordered. Composition is skewed to acidic residues over residues 2692–2701 (ADPEEVEEEE) and 2715–2725 (SSEEELDDSPD). Positions 2727 to 2750 (LDSRIETAQRQYSETEPHDTKEEN) are enriched in basic and acidic residues. A compositionally biased stretch (polar residues) spans 2758-2769 (SSVTSKTNSSTG). Basic and acidic residues predominate over residues 2782–2804 (TGEKTEPNEDDGSIKSQEDDHPI). The span at 2805 to 2815 (IIKRRRGRPRK) shows a compositional bias: basic residues. The segment at residues 2807 to 2819 (KRRRGRPRKYPAE) is a DNA-binding region (a.T hook). The segment covering 2822-2832 (FKSKEDSKTET) has biased composition (basic and acidic residues). The span at 2833–2843 (DITTVEQSSPS) shows a compositional bias: polar residues. Phosphoserine occurs at positions 2840 and 2841. Positions 2853–2867 (ESNKEIANLEEKSTS) are enriched in basic and acidic residues. Ser2888 is subject to Phosphoserine. Thr2890 is modified (phosphothreonine). Ser2892, Ser2898, and Ser2907 each carry phosphoserine. Glycyl lysine isopeptide (Lys-Gly) (interchain with G-Cter in ubiquitin) cross-links involve residues Lys2915 and Lys2916. The segment covering 2919-2932 (ESDEEEEEEEEEEP) has biased composition (acidic residues). At Ser2920 the chain carries Phosphoserine. A compositionally biased stretch (basic and acidic residues) spans 2975 to 2987 (LAKEKLSTSEKVS). Phosphoserine is present on Ser3000. Residues 3020–3032 (QKVDENPLKKAKR) are compositionally biased toward basic and acidic residues.

The protein belongs to the BOD1 family. In terms of assembly, interacts (via COMPASS-Shg1 domain) with SETD1A at stalled replication forks; this interaction mediates FANCD2-dependent nucleosome remodeling at reversed forks protecting them from nucleolytic degradation.

The protein localises to the chromosome. Its function is as follows. Component of the fork protection machinery required to protect stalled/damaged replication forks from uncontrolled DNA2-dependent resection. Acts by stabilizing RAD51 at stalled replication forks and protecting RAD51 nucleofilaments from the antirecombinogenic activities of FBH1 and BLM. Does not regulate spindle orientation. In Mus musculus (Mouse), this protein is Biorientation of chromosomes in cell division protein 1-like 1.